Here is a 311-residue protein sequence, read N- to C-terminus: 4-hydroxy-3-methylbut-2-enyl diphosphate reductase (311 aa).

Cys-12 contributes to the [4Fe-4S] cluster binding site. (2E)-4-hydroxy-3-methylbut-2-enyl diphosphate is bound by residues His-41 and His-74. Residues His-41 and His-74 each coordinate dimethylallyl diphosphate. Residues His-41 and His-74 each contribute to the isopentenyl diphosphate site. Cys-96 is a binding site for [4Fe-4S] cluster. (2E)-4-hydroxy-3-methylbut-2-enyl diphosphate is bound at residue His-124. His-124 lines the dimethylallyl diphosphate pocket. His-124 contacts isopentenyl diphosphate. Glu-126 acts as the Proton donor in catalysis. Thr-167 is a (2E)-4-hydroxy-3-methylbut-2-enyl diphosphate binding site. [4Fe-4S] cluster is bound at residue Cys-197. The (2E)-4-hydroxy-3-methylbut-2-enyl diphosphate site is built by Ser-225, Ser-226, Asn-227, and Ser-269. Dimethylallyl diphosphate is bound by residues Ser-225, Ser-226, Asn-227, and Ser-269. Residues Ser-225, Ser-226, Asn-227, and Ser-269 each coordinate isopentenyl diphosphate.

Belongs to the IspH family. Requires [4Fe-4S] cluster as cofactor.

It carries out the reaction isopentenyl diphosphate + 2 oxidized [2Fe-2S]-[ferredoxin] + H2O = (2E)-4-hydroxy-3-methylbut-2-enyl diphosphate + 2 reduced [2Fe-2S]-[ferredoxin] + 2 H(+). It catalyses the reaction dimethylallyl diphosphate + 2 oxidized [2Fe-2S]-[ferredoxin] + H2O = (2E)-4-hydroxy-3-methylbut-2-enyl diphosphate + 2 reduced [2Fe-2S]-[ferredoxin] + 2 H(+). It functions in the pathway isoprenoid biosynthesis; dimethylallyl diphosphate biosynthesis; dimethylallyl diphosphate from (2E)-4-hydroxy-3-methylbutenyl diphosphate: step 1/1. Its pathway is isoprenoid biosynthesis; isopentenyl diphosphate biosynthesis via DXP pathway; isopentenyl diphosphate from 1-deoxy-D-xylulose 5-phosphate: step 6/6. Catalyzes the conversion of 1-hydroxy-2-methyl-2-(E)-butenyl 4-diphosphate (HMBPP) into a mixture of isopentenyl diphosphate (IPP) and dimethylallyl diphosphate (DMAPP). Acts in the terminal step of the DOXP/MEP pathway for isoprenoid precursor biosynthesis. This Aeromonas hydrophila subsp. hydrophila (strain ATCC 7966 / DSM 30187 / BCRC 13018 / CCUG 14551 / JCM 1027 / KCTC 2358 / NCIMB 9240 / NCTC 8049) protein is 4-hydroxy-3-methylbut-2-enyl diphosphate reductase.